Consider the following 695-residue polypeptide: Probable serine/threonine-protein kinase abkD (695 aa).

The segment covering 105-119 (TTKPQPCQAKPPSSK) has biased composition (polar residues). Positions 105–149 (TTKPQPCQAKPPSSKQQQQQQQQQQQQQQQQQQQQSKKKTSKDRL) are disordered. Residues 118–150 (SKQQQQQQQQQQQQQQQQQQQQSKKKTSKDRLR) adopt a coiled-coil conformation. The segment covering 120 to 139 (QQQQQQQQQQQQQQQQQQQQ) has biased composition (low complexity). A helical transmembrane segment spans residues 177 to 193 (TIASILAAIALIIYSYE). Residues 317-695 (DFDRLPIAAA…LIKDQMKKLG (379 aa)) form the Protein kinase domain. ATP contacts are provided by residues 323-331 (IAAASLAQV) and K345. The active-site Proton acceptor is the D477.

The protein belongs to the protein kinase superfamily. ADCK protein kinase family.

It localises to the membrane. This Dictyostelium discoideum (Social amoeba) protein is Probable serine/threonine-protein kinase abkD (abkD).